Reading from the N-terminus, the 102-residue chain is Circadian clock oscillator protein KaiA (102 aa).

In terms of domain architecture, KaiA C-terminal spans 1–102 (MTQEVDQQIL…CEAYRGAIFK (102 aa)).

It belongs to the KaiA family. Homodimer. The KaiABC complex composition changes during the circadian cycle to control KaiC phosphorylation. Complexes KaiC(6), KaiA(2-4):KaiC(6), KaiB(6):KaiC(6) and KaiC(6):KaiB(6):KaiA(12) are among the most important forms, many form cooperatively. KaiA and CikA bind to the same region of the KaiB(fs) form and therefore compete.

Key component of the KaiABC oscillator complex, which constitutes the main circadian regulator in cyanobacteria. Complex composition changes during the circadian cycle to control KaiC phosphorylation. KaiA stimulates KaiC autophosphorylation, while KaiB sequesters KaiA, leading to KaiC autodephosphorylation. KaiA binding to the KaiC CII domain during the subjective day yields KaiA(2-4):KaiC(6) complexes which stimulate KaiC autophosphorylation. Phospho-Ser-431 KaiC accumulation triggers binding of KaiB during the subjective night to form the KaiB(6):KaiC(6) complex, leading to changes in the output regulators CikA and SasA. KaiB(6):KaiC(6) formation exposes a site for KaiA binding on KaiB that sequesters KaiA from KaiC's CII domain, making the KaiC(6):KaiB(6):KaiA(12) complex resulting in KaiC autodephosphorylation. Complete dephosphorylation of KaiC leads to dissociation of KaiA(2):KaiB(1), completing 1 cycle of the Kai oscillator. The chain is Circadian clock oscillator protein KaiA from Nostoc sp. (strain PCC 7120 / SAG 25.82 / UTEX 2576).